We begin with the raw amino-acid sequence, 456 residues long: tRNA modification GTPase MnmE (456 aa).

The (6S)-5-formyl-5,6,7,8-tetrahydrofolate site is built by R23, E85, and R124. In terms of domain architecture, TrmE-type G spans 220 to 376 (GVAVLIAGKP…LKESIFQTFI (157 aa)). N230 serves as a coordination point for K(+). Residues 230–235 (NVGKSS), 249–255 (TSVPGTT), and 274–277 (DTAG) contribute to the GTP site. S234 serves as a coordination point for Mg(2+). K(+)-binding residues include T249, V251, and T254. T255 provides a ligand contact to Mg(2+). K456 serves as a coordination point for (6S)-5-formyl-5,6,7,8-tetrahydrofolate.

This sequence belongs to the TRAFAC class TrmE-Era-EngA-EngB-Septin-like GTPase superfamily. TrmE GTPase family. As to quaternary structure, homodimer. Heterotetramer of two MnmE and two MnmG subunits. It depends on K(+) as a cofactor.

The protein resides in the cytoplasm. In terms of biological role, exhibits a very high intrinsic GTPase hydrolysis rate. Involved in the addition of a carboxymethylaminomethyl (cmnm) group at the wobble position (U34) of certain tRNAs, forming tRNA-cmnm(5)s(2)U34. This is tRNA modification GTPase MnmE from Geobacter sulfurreducens (strain ATCC 51573 / DSM 12127 / PCA).